A 259-amino-acid polypeptide reads, in one-letter code: GTP cyclohydrolase FolE2 (259 aa).

Belongs to the GTP cyclohydrolase IV family.

The catalysed reaction is GTP + H2O = 7,8-dihydroneopterin 3'-triphosphate + formate + H(+). Its pathway is cofactor biosynthesis; 7,8-dihydroneopterin triphosphate biosynthesis; 7,8-dihydroneopterin triphosphate from GTP: step 1/1. In terms of biological role, converts GTP to 7,8-dihydroneopterin triphosphate. The chain is GTP cyclohydrolase FolE2 from Thermosipho melanesiensis (strain DSM 12029 / CIP 104789 / BI429).